The primary structure comprises 695 residues: MHTFFVTSTGFGVGLTSTSLGLVRALEYGGLKAGFYKPVAQQHPGNSKLEYSTELISRTLGLAPPAPLPLATVEHLLGEGQIDDLMEDIVRRFKQASEGYDVMVVEGMVPTRHVSYASRVNTRLASSLDADIILVSSAEDDALQAITDRIEIQAQFFGGAQNPRLLGVILNKIRTDHSDDLFEQLKNHSTLFHQSSFQILGCIPWEDSLNAPRMADVVTQLQAQIVNAGDSEKRRVQDIVLFASAAPNSVTLLRPGVLVVTPGDRDDIVMAASLAVLNGVPLAGLLLCSDFPPDPRVLELCKGALTKGLPVCTVTTNSYDTAANLHRMNREIPLDDHERAERITNFVANHIRQELLVKRCGEPQEQRLSPPAFRYRLVKRAQEADCRIVLPEGYEPRTIQAATICQERGIARCVLLAKPDAVKAVASARGITLPEGLEMIDPEKVRRNYVAAMVELRKHKGLNEPMALAQLEDNVVLGTMMLATGEVDGLVSGAINTTANTIRPALQLIKTAPGFKLVSSVFFMLLPEQVVVYGDCAVNPNPTAEELADIALQSAASAQALGIEPRVAMLSYSTGDSGSGQEVEKVREATRLARLARPDLLIDGPLQYDAAAIASVGRQKAPGSPVAGRATVFIFPDLNTGNTTYKAVQRSANVVSVGPMLQGLRKPVNDLSRGASVEDIVYTIALTAVQAASQR.

Positions 372–695 (AFRYRLVKRA…LTAVQAASQR (324 aa)) are phosphate acetyltransferase.

It in the N-terminal section; belongs to the CobB/CobQ family. This sequence in the C-terminal section; belongs to the phosphate acetyltransferase and butyryltransferase family. As to quaternary structure, homohexamer.

The protein resides in the cytoplasm. It catalyses the reaction acetyl-CoA + phosphate = acetyl phosphate + CoA. It participates in metabolic intermediate biosynthesis; acetyl-CoA biosynthesis; acetyl-CoA from acetate: step 2/2. Its function is as follows. Involved in acetate metabolism. This Nitrosomonas europaea (strain ATCC 19718 / CIP 103999 / KCTC 2705 / NBRC 14298) protein is Phosphate acetyltransferase (pta).